Reading from the N-terminus, the 78-residue chain is Defensin-like protein 308 (78 aa).

The N-terminal stretch at 1 to 19 (MKTSAFFIAVLLILSCSSS) is a signal peptide. 3 disulfides stabilise this stretch: C31–C50, C37–C55, and C41–C57.

This sequence belongs to the DEFL family.

It localises to the secreted. This chain is Defensin-like protein 308, found in Arabidopsis thaliana (Mouse-ear cress).